The primary structure comprises 248 residues: Probable transcriptional regulatory protein BBta_6910 (248 aa).

This sequence belongs to the TACO1 family.

The protein resides in the cytoplasm. This is Probable transcriptional regulatory protein BBta_6910 from Bradyrhizobium sp. (strain BTAi1 / ATCC BAA-1182).